The primary structure comprises 250 residues: Cholesterol ring-cleaving hydrolase IpdB subunit (250 aa).

The protein belongs to the 3-oxoacid CoA-transferase subunit B family. In terms of assembly, heterotetramer composed of 2 IpdA subunits and 2 IpdB subunits.

It carries out the reaction (3E)-2-(2-carboxylatoethyl)-3-methyl-6-oxocyclohex-1-ene-1-carboxyl-CoA + H2O = 6-methyl-3,7-dioxodecanedioyl-CoA. It functions in the pathway steroid metabolism; cholesterol degradation. Its function is as follows. Involved in the final steps of cholesterol and steroid degradation. Opens the last steroid ring of cholesterol by catalyzing the hydrolysis of (3E)-2-(2-carboxylatoethyl)-3-methyl-6-oxocyclohex-1-ene-1-carboxyl-CoA (COCHEA-CoA) to 6-methyl-3,7-dioxodecanedioyl-CoA (MeDODA-CoA). The sequence is that of Cholesterol ring-cleaving hydrolase IpdB subunit from Mycobacterium bovis (strain ATCC BAA-935 / AF2122/97).